A 262-amino-acid chain; its full sequence is tRNA pseudouridine synthase A (262 aa).

The active-site Nucleophile is aspartate 55. Position 116 (tyrosine 116) interacts with substrate.

This sequence belongs to the tRNA pseudouridine synthase TruA family. As to quaternary structure, homodimer.

The enzyme catalyses uridine(38/39/40) in tRNA = pseudouridine(38/39/40) in tRNA. Formation of pseudouridine at positions 38, 39 and 40 in the anticodon stem and loop of transfer RNAs. This Bdellovibrio bacteriovorus (strain ATCC 15356 / DSM 50701 / NCIMB 9529 / HD100) protein is tRNA pseudouridine synthase A.